The sequence spans 327 residues: Geranylgeranyl transferase type-2 subunit alpha (327 aa).

PFTA repeat units lie at residues Tyr44–Ser78, Phe84–Thr118, Val123–Ser157, Leu163–Gln197, and Tyr207–Val241.

It belongs to the protein prenyltransferase subunit alpha family. In terms of assembly, heterodimer of an alpha and a beta subunit.

It catalyses the reaction geranylgeranyl diphosphate + L-cysteinyl-[protein] = S-geranylgeranyl-L-cysteinyl-[protein] + diphosphate. In terms of biological role, catalyzes the transfer of a geranyl-geranyl moiety from geranyl-geranyl pyrophosphate to proteins having the C-terminal -XCC or -XCXC, where both cysteines may become modified. Acts on YPT1 and SEC4. This Saccharomyces cerevisiae (strain ATCC 204508 / S288c) (Baker's yeast) protein is Geranylgeranyl transferase type-2 subunit alpha (BET4).